A 692-amino-acid chain; its full sequence is E3 ubiquitin-protein ligase brl1 (692 aa).

A coiled-coil region spans residues 302–370 (SNEEKIESIN…RNERDSLVAK (69 aa)). The segment at 639 to 679 (CSVCNFSNWKSKLIPNCGHAFCSNCMEPFYEHKTSTCPQCE) adopts an RING-type zinc-finger fold.

It belongs to the BRE1 family. Component of the histone H2B ubiquitin ligase complex (HULC) composed of at least brl1, brl2, rhp6 and shf1.

It is found in the nucleus. It carries out the reaction S-ubiquitinyl-[E2 ubiquitin-conjugating enzyme]-L-cysteine + [acceptor protein]-L-lysine = [E2 ubiquitin-conjugating enzyme]-L-cysteine + N(6)-ubiquitinyl-[acceptor protein]-L-lysine.. It functions in the pathway protein modification; protein ubiquitination. In terms of biological role, E3 ubiquitin-protein ligase which belongs to the histone H2B ubiquitin ligase complex (HULC) which mediates monoubiquitination of histone H2B to form H2BK123ub1. H2BK123ub1 gives a specific tag for epigenetic transcriptional activation and is also a prerequisite for H3K4me and H3K79me formation. The chain is E3 ubiquitin-protein ligase brl1 (brl1) from Schizosaccharomyces pombe (strain 972 / ATCC 24843) (Fission yeast).